A 221-amino-acid chain; its full sequence is Large ribosomal subunit protein uL3 (221 aa).

Belongs to the universal ribosomal protein uL3 family. In terms of assembly, part of the 50S ribosomal subunit. Forms a cluster with proteins L14 and L19.

In terms of biological role, one of the primary rRNA binding proteins, it binds directly near the 3'-end of the 23S rRNA, where it nucleates assembly of the 50S subunit. This is Large ribosomal subunit protein uL3 from Chlamydia muridarum (strain MoPn / Nigg).